The sequence spans 167 residues: Large ribosomal subunit protein uL10 (167 aa).

It belongs to the universal ribosomal protein uL10 family. In terms of assembly, part of the ribosomal stalk of the 50S ribosomal subunit. The N-terminus interacts with L11 and the large rRNA to form the base of the stalk. The C-terminus forms an elongated spine to which L12 dimers bind in a sequential fashion forming a multimeric L10(L12)X complex.

Forms part of the ribosomal stalk, playing a central role in the interaction of the ribosome with GTP-bound translation factors. The polypeptide is Large ribosomal subunit protein uL10 (Paraburkholderia phytofirmans (strain DSM 17436 / LMG 22146 / PsJN) (Burkholderia phytofirmans)).